Consider the following 112-residue polypeptide: UPF0482 protein SG1468 (112 aa).

Positions 1-22 are cleaved as a signal peptide; sequence MNTIPTRCLLGGLLALSLLAYA.

It belongs to the UPF0482 family.

The chain is UPF0482 protein SG1468 from Sodalis glossinidius (strain morsitans).